We begin with the raw amino-acid sequence, 995 residues long: Meckelin (995 aa).

Residues methionine 1–alanine 36 form the signal peptide. Residues glutamine 37–glycine 280 form a cysteine-rich region. Residues glutamine 37–glutamate 519 lie on the Extracellular side of the membrane. 11 disulfide bridges follow: cysteine 49-cysteine 62, cysteine 65-cysteine 78, cysteine 80-cysteine 97, cysteine 100-cysteine 114, cysteine 117-cysteine 127, cysteine 129-cysteine 150, cysteine 153-cysteine 170, cysteine 173-cysteine 184, cysteine 186-cysteine 197, cysteine 237-cysteine 246, and cysteine 253-cysteine 268. N-linked (GlcNAc...) asparagine glycosylation occurs at asparagine 141. Asparagine 179 carries N-linked (GlcNAc...) asparagine glycosylation. N-linked (GlcNAc...) asparagine glycosylation occurs at asparagine 242. Asparagine 318 carries N-linked (GlcNAc...) asparagine glycosylation. Cysteine 357 and cysteine 378 form a disulfide bridge. The chain crosses the membrane as a helical span at residues alanine 520–arginine 548. Residues arginine 549–glutamine 558 lie on the Cytoplasmic side of the membrane. Residues threonine 559 to phenylalanine 590 form a helical membrane-spanning segment. Over lysine 591 to proline 603 the chain is Extracellular. A helical transmembrane segment spans residues isoleucine 604–glutamine 631. Residues isoleucine 632–threonine 670 are Cytoplasmic-facing. The segment at residues tyrosine 671–glutamate 679 is an intramembrane region (helical). A discontinuously helical membrane pass occupies residues tyrosine 671–valine 701. The stretch at isoleucine 680–serine 688 is an intramembrane region. The helical intramembrane region spans leucine 689–valine 701. Over valine 702–leucine 731 the chain is Extracellular. The helical intramembrane region spans arginine 732–arginine 757. A discontinuously helical membrane pass occupies residues arginine 732 to serine 771. An intramembrane segment occupies phenylalanine 758–lysine 762. The helical intramembrane region spans isoleucine 763 to serine 771. Over methionine 772–serine 926 the chain is Cytoplasmic. Residues glycine 828–serine 917 are a coiled coil. The segment at residues phenylalanine 927–serine 929 is an intramembrane region (helical). The discontinuously helical transmembrane segment at phenylalanine 927–leucine 952 threads the bilayer. The stretch at valine 930–glutamate 936 is an intramembrane region. The segment at residues alanine 937–leucine 952 is an intramembrane region (helical). Over alanine 953–phenylalanine 957 the chain is Extracellular. Residues isoleucine 958–serine 985 form a helical membrane-spanning segment. Topologically, residues lysine 986–isoleucine 995 are cytoplasmic.

In terms of assembly, homodimer. Part of the tectonic-like complex (also named B9 complex). Interacts with DNAJB9, DNAJC10 and mutated SFTPC. Interacts with SYNE2 during the early establishment of cell polarity. Interacts (via C-terminus) with FLNA. Interacts with TMEM218. Interacts with WNT5A. Interacts with ROR2. As to expression, widely expressed in adult and fetal tissues. Expressed at higher level in spinal cord.

It is found in the cell membrane. Its subcellular location is the endoplasmic reticulum membrane. The protein localises to the cell projection. The protein resides in the cilium. It localises to the cytoplasm. It is found in the cytoskeleton. Its subcellular location is the cilium basal body. Functionally, required for ciliary structure and function. Part of the tectonic-like complex which is required for tissue-specific ciliogenesis and may regulate ciliary membrane composition. Involved in centrosome migration to the apical cell surface during early ciliogenesis. Involved in the regulation of cilia length and appropriate number through the control of centrosome duplication. Is a key regulator of stereociliary bundle orientation. Required for epithelial cell branching morphology. Essential for endoplasmic reticulum-associated degradation (ERAD) of surfactant protein C (SFTPC). Involved in the negative regulation of canonical Wnt signaling, and activation of the non-canonical cascade stimulated by WNT5A. In non-canonical Wnt signaling, it may act as ROR2 coreceptor. The polypeptide is Meckelin (TMEM67) (Homo sapiens (Human)).